A 124-amino-acid chain; its full sequence is MEDERWKLSSSKGRSKSGRSCSSSSNYYYHSSDFNSSNATTLSRSYSASVTASRHATTAWSAAGAGGGGASSSSSSQHQHQQQQQQSNNSQRLSKKCVEAVKEHRARFYIVRRCVSMLVCWRDY.

The disordered stretch occupies residues 1 to 23; the sequence is MEDERWKLSSSKGRSKSGRSCSS. N-linked (GlcNAc...) asparagine glycans are attached at residues Asn-35 and Asn-38. A helical transmembrane segment spans residues 59 to 75; sequence AWSAAGAGGGGASSSSS. Residues 60 to 95 are disordered; it reads WSAAGAGGGGASSSSSSQHQHQQQQQQSNNSQRLSK. The segment covering 71-91 has biased composition (low complexity); it reads SSSSSSQHQHQQQQQQSNNSQ. The N-linked (GlcNAc...) asparagine glycan is linked to Asn-88. Positions 92–124 are required for DVL/RTFL small polypeptide activity; that stretch reads RLSKKCVEAVKEHRARFYIVRRCVSMLVCWRDY.

Belongs to the DVL/RTFL small polypeptides family.

It localises to the cell membrane. Functionally, small polypeptide acting as a regulatory molecule which coordinates cellular responses required for differentiation, growth and development, probably by restricting polar cell proliferation in lateral organs (e.g. leaves and petioles). The sequence is that of Small polypeptide ROTUNDIFOLIA LIKE 3 from Oryza sativa subsp. japonica (Rice).